The primary structure comprises 175 residues: Translation initiation factor IF-3 (175 aa).

The protein belongs to the IF-3 family. Monomer.

It localises to the cytoplasm. Functionally, IF-3 binds to the 30S ribosomal subunit and shifts the equilibrium between 70S ribosomes and their 50S and 30S subunits in favor of the free subunits, thus enhancing the availability of 30S subunits on which protein synthesis initiation begins. The chain is Translation initiation factor IF-3 from Blochmanniella floridana.